A 135-amino-acid polypeptide reads, in one-letter code: Galectin-1 (135 aa).

Alanine 2 is modified (N-acetylalanine). The 132-residue stretch at 4-135 (GLVASNLNLK…DFKIKCVAFE (132 aa)) folds into the Galectin domain. 2 positions are modified to N6-acetyllysine: lysine 13 and lysine 29. A Phosphoserine modification is found at serine 30. A beta-D-galactoside-binding positions include 45–49 (HFNPR), histidine 53, asparagine 62, and 69–72 (WGAE). Lysine 108 is subject to N6-acetyllysine; alternate. An N6-succinyllysine; alternate modification is found at lysine 108. An N6-acetyllysine modification is found at lysine 128.

In terms of assembly, homodimer. Binds LGALS3BP. Interacts with CD2, CD3, CD4, CD6, CD7, CD43, ALCAM and CD45. Interacts with laminin (via poly-N-acetyllactosamine). Interacts with SUSD2. Interacts with cargo receptor TMED10; the interaction mediates the translocation from the cytoplasm into the ERGIC (endoplasmic reticulum-Golgi intermediate compartment) and thereby secretion.

Its subcellular location is the secreted. The protein resides in the extracellular space. It localises to the extracellular matrix. The protein localises to the cytoplasm. In terms of biological role, lectin that binds beta-galactoside and a wide array of complex carbohydrates. Plays a role in regulating apoptosis, cell proliferation and cell differentiation. Inhibits CD45 protein phosphatase activity and therefore the dephosphorylation of Lyn kinase. Strong inducer of T-cell apoptosis. The protein is Galectin-1 (LGALS1) of Ovis aries (Sheep).